The sequence spans 331 residues: Ketol-acid reductoisomerase (NADP(+)) (331 aa).

One can recognise a KARI N-terminal Rossmann domain in the interval 2–182 (AQLFYDSDAD…GGTRAGILET (181 aa)). NADP(+) is bound by residues 25 to 28 (YGSQ), Ser-51, Ser-53, and 83 to 86 (DEFQ). His-108 is a catalytic residue. Gly-134 provides a ligand contact to NADP(+). The KARI C-terminal knotted domain maps to 183 to 328 (NFKEETETDL…KGLRSMFSWL (146 aa)). Residues Asp-191, Glu-195, Glu-227, and Glu-231 each contribute to the Mg(2+) site. Residue Ser-252 participates in substrate binding.

Belongs to the ketol-acid reductoisomerase family. Mg(2+) is required as a cofactor.

It catalyses the reaction (2R)-2,3-dihydroxy-3-methylbutanoate + NADP(+) = (2S)-2-acetolactate + NADPH + H(+). The enzyme catalyses (2R,3R)-2,3-dihydroxy-3-methylpentanoate + NADP(+) = (S)-2-ethyl-2-hydroxy-3-oxobutanoate + NADPH + H(+). It participates in amino-acid biosynthesis; L-isoleucine biosynthesis; L-isoleucine from 2-oxobutanoate: step 2/4. It functions in the pathway amino-acid biosynthesis; L-valine biosynthesis; L-valine from pyruvate: step 2/4. Its function is as follows. Involved in the biosynthesis of branched-chain amino acids (BCAA). Catalyzes an alkyl-migration followed by a ketol-acid reduction of (S)-2-acetolactate (S2AL) to yield (R)-2,3-dihydroxy-isovalerate. In the isomerase reaction, S2AL is rearranged via a Mg-dependent methyl migration to produce 3-hydroxy-3-methyl-2-ketobutyrate (HMKB). In the reductase reaction, this 2-ketoacid undergoes a metal-dependent reduction by NADPH to yield (R)-2,3-dihydroxy-isovalerate. The protein is Ketol-acid reductoisomerase (NADP(+)) of Synechococcus sp. (strain CC9311).